The following is a 609-amino-acid chain: Spore-specific protein YSW1 (609 aa).

The tract at residues 1-24 is disordered; it reads MSSLADTVEGSEAKRGRFSNNALT. A phosphoserine mark is found at S159 and S160. A disordered region spans residues 162 to 225; sequence DENESHFTDA…DDEFSPATPP (64 aa). Residues 169–179 are compositionally biased toward polar residues; it reads TDANSHVMQSK. A compositionally biased stretch (basic and acidic residues) spans 200-209; the sequence is LKKEYEKSFE. A compositionally biased stretch (acidic residues) spans 210–219; sequence EYSDDSDDEF.

This is Spore-specific protein YSW1 (YSW1) from Saccharomyces cerevisiae (strain ATCC 204508 / S288c) (Baker's yeast).